A 296-amino-acid chain; its full sequence is Nucleotide-binding protein SUB0630 (296 aa).

An ATP-binding site is contributed by 13–20 (GMSGAGKT). 63-66 (DMRS) is a binding site for GTP.

The protein belongs to the RapZ-like family.

In terms of biological role, displays ATPase and GTPase activities. The sequence is that of Nucleotide-binding protein SUB0630 from Streptococcus uberis (strain ATCC BAA-854 / 0140J).